The following is a 270-amino-acid chain: Aliphatic sulfonates import ATP-binding protein SsuB 2 (270 aa).

In terms of domain architecture, ABC transporter spans leucine 17–alanine 241. Glycine 50–serine 57 is an ATP binding site.

This sequence belongs to the ABC transporter superfamily. Aliphatic sulfonates importer (TC 3.A.1.17.2) family. In terms of assembly, the complex is composed of two ATP-binding proteins (SsuB), two transmembrane proteins (SsuC) and a solute-binding protein (SsuA).

The protein resides in the cell inner membrane. It carries out the reaction ATP + H2O + aliphatic sulfonate-[sulfonate-binding protein]Side 1 = ADP + phosphate + aliphatic sulfonateSide 2 + [sulfonate-binding protein]Side 1.. Functionally, part of the ABC transporter complex SsuABC involved in aliphatic sulfonates import. Responsible for energy coupling to the transport system. The chain is Aliphatic sulfonates import ATP-binding protein SsuB 2 from Burkholderia cenocepacia (strain HI2424).